A 321-amino-acid chain; its full sequence is Glucokinase (321 aa).

Residue 8–13 (GDVGGT) participates in ATP binding.

Belongs to the bacterial glucokinase family.

Its subcellular location is the cytoplasm. The enzyme catalyses D-glucose + ATP = D-glucose 6-phosphate + ADP + H(+). This is Glucokinase from Shigella flexneri serotype 5b (strain 8401).